Consider the following 648-residue polypeptide: Proton myo-inositol cotransporter (648 aa).

The Cytoplasmic portion of the chain corresponds to 1–76 (MSRKASENVE…AARRQFQQDE (76 aa)). A phosphoserine mark is found at S6, S47, and S50. A helical membrane pass occupies residues 77 to 97 (TPAFVYVVAVFSALGGFLFGY). Residues 98-125 (DTGVVSGAMLLLKRQLSLDALWQELLVS) are Extracellular-facing. A helical transmembrane segment spans residues 126 to 146 (STVGAAAVSALAGGALNGVFG). Topologically, residues 147–148 (RR) are cytoplasmic. A helical membrane pass occupies residues 149-169 (AAILLASALFTAGSAVLAAAN). Over 170-178 (NKETLLAGR) the chain is Extracellular. Residues 179–199 (LVVGLGIGIASMTVPVYIAEV) traverse the membrane as a helical segment. The Cytoplasmic portion of the chain corresponds to 200–212 (SPPNLRGRLVTIN). A helical transmembrane segment spans residues 213-233 (TLFITGGQFFASVVDGAFSYL). Over 234–239 (QKDGWR) the chain is Extracellular. The helical transmembrane segment at 240–260 (YMLGLAAVPAVIQFFGFLFLP) threads the bilayer. Over 261 to 324 (ESPRWLIQKG…RMLSYPPTRR (64 aa)) the chain is Cytoplasmic. A helical membrane pass occupies residues 325-345 (ALIVGCGLQMFQQLSGINTIM). The Extracellular segment spans residues 346–363 (YYSATILQMSGVEDDRLA). A helical membrane pass occupies residues 364-384 (IWLASVTAFTNFIFTLVGVWL). The Cytoplasmic portion of the chain corresponds to 385–393 (VEKVGRRKL). A helical transmembrane segment spans residues 394–414 (TFGSLAGTTVALIILALGFVL). Residues 415 to 508 (SAQVSPRITF…NFCPTPYSWT (94 aa)) are Extracellular-facing. N433, N458, and N485 each carry an N-linked (GlcNAc...) asparagine glycan. A helical transmembrane segment spans residues 509-529 (ALLGLILYLVFFAPGMGPMPW). Over 530-549 (TVNSEIYPLWARSTGNACSS) the chain is Cytoplasmic. A helical membrane pass occupies residues 550–570 (GINWIFNVLVSLTFLHTAEYL). Residues 571 to 573 (TYY) lie on the Extracellular side of the membrane. Residues 574 to 594 (GAFFLYAGFAAVGLLFIYGCL) traverse the membrane as a helical segment. At 595–648 (PETKGKKLEEIESLFDNRLCTCGTSDSDEGRYIEYIRVKGSNYHLSDNDASDVE) the chain is on the cytoplasmic side. A phosphoserine mark is found at S640 and S645.

The protein belongs to the major facilitator superfamily. Sugar transporter (TC 2.A.1.1) family. Glycosylated. In terms of tissue distribution, predominantly expressed in the brain.

The protein resides in the cell membrane. It carries out the reaction myo-inositol(out) + H(+)(out) = myo-inositol(in) + H(+)(in). Its function is as follows. H(+)-myo-inositol cotransporter. Can also transport related stereoisomers. The polypeptide is Proton myo-inositol cotransporter (Homo sapiens (Human)).